The primary structure comprises 84 residues: CLAVATA3/ESR (CLE)-related protein 13 (84 aa).

Residues 1–29 (MGRYTTDQVQVYVLVIVLCTFFSTLQARS) form the signal peptide. The tract at residues 57–84 (KQVRDISGDRLSPAGPDPQHNGRSPPRK) is disordered. Pro-69 and Pro-72 each carry hydroxyproline. The O-linked (Ara...) hydroxyproline glycan is linked to Pro-72.

This sequence belongs to the CLV3/ESR signal peptide family. In terms of processing, the O-glycosylation (arabinosylation) of the hydroxyproline Pro-72 enhances binding affinity of the CLE13p peptide for its receptor. As to expression, expressed in young nodules throughout the central tissue. Expressed in the apical region of elongated nodules, corresponding to the meristematic and early infection zones.

The protein resides in the secreted. It localises to the extracellular space. In terms of biological role, signaling peptide involved in the regulation of nodulation. Moves from root to shoot to function with the receptor kinase SUNN, in a signaling pathway that plays roles during cellular differentiation, both at the onset of nodulation, and later during nodule meristem development and subsequent homeostasis. Interacts with SUNN signaling to control nodule numbers. SUNN is involved in the autoregulation of nodulation (AON), a long distance systemic signaling from root to shoot and back again, which allows legumes to limit the number of root nodules formed based on available nitrogen and previous rhizobial colonization. The chain is CLAVATA3/ESR (CLE)-related protein 13 from Medicago truncatula (Barrel medic).